A 29-amino-acid polypeptide reads, in one-letter code: Omega-conotoxins GVIIA/GVIIB (29 aa).

3 disulfides stabilise this stretch: Cys-1/Cys-16, Cys-8/Cys-19, and Cys-15/Cys-26. 4-hydroxyproline occurs at positions 4 and 7.

As to expression, expressed by the venom duct.

It localises to the secreted. Its function is as follows. Omega-conotoxins act at presynaptic membranes, they bind and block voltage-gated calcium channels (Cav). In Conus geographus (Geography cone), this protein is Omega-conotoxins GVIIA/GVIIB.